A 171-amino-acid polypeptide reads, in one-letter code: Serine acetyltransferase (171 aa).

This sequence belongs to the transferase hexapeptide repeat family.

It localises to the cytoplasm. The catalysed reaction is L-serine + acetyl-CoA = O-acetyl-L-serine + CoA. It participates in amino-acid biosynthesis; L-cysteine biosynthesis; L-cysteine from L-serine: step 1/2. The protein is Serine acetyltransferase (cysE) of Helicobacter pylori (strain ATCC 700392 / 26695) (Campylobacter pylori).